The sequence spans 491 residues: UDP-N-acetylmuramoyl-L-alanyl-D-glutamate--2,6-diaminopimelate ligase (491 aa).

Ser30 serves as a coordination point for UDP-N-acetyl-alpha-D-muramoyl-L-alanyl-D-glutamate. ATP is bound at residue 108–114 (GTNGKTT). UDP-N-acetyl-alpha-D-muramoyl-L-alanyl-D-glutamate-binding positions include Asn149, 150 to 151 (TT), Ser177, Gln183, and Arg185. Lys217 carries the N6-carboxylysine modification. Residues Arg383, 407–410 (DNPR), Gly458, and Glu462 contribute to the meso-2,6-diaminopimelate site. The Meso-diaminopimelate recognition motif signature appears at 407 to 410 (DNPR).

Belongs to the MurCDEF family. MurE subfamily. Mg(2+) is required as a cofactor. Post-translationally, carboxylation is probably crucial for Mg(2+) binding and, consequently, for the gamma-phosphate positioning of ATP.

It localises to the cytoplasm. It catalyses the reaction UDP-N-acetyl-alpha-D-muramoyl-L-alanyl-D-glutamate + meso-2,6-diaminopimelate + ATP = UDP-N-acetyl-alpha-D-muramoyl-L-alanyl-gamma-D-glutamyl-meso-2,6-diaminopimelate + ADP + phosphate + H(+). It functions in the pathway cell wall biogenesis; peptidoglycan biosynthesis. Catalyzes the addition of meso-diaminopimelic acid to the nucleotide precursor UDP-N-acetylmuramoyl-L-alanyl-D-glutamate (UMAG) in the biosynthesis of bacterial cell-wall peptidoglycan. The chain is UDP-N-acetylmuramoyl-L-alanyl-D-glutamate--2,6-diaminopimelate ligase from Listeria monocytogenes serovar 1/2a (strain ATCC BAA-679 / EGD-e).